A 129-amino-acid polypeptide reads, in one-letter code: Sm-like protein LSM4 (129 aa).

Residues 2-75 (LPLSLLKTAQ…IKYLRVPDEV (74 aa)) enclose the Sm domain. The segment covering 79-90 (VQEEKTRTDRKP) has biased composition (basic and acidic residues). Positions 79 to 129 (VQEEKTRTDRKPPGVGRGRGRGVDDGGARGRGRGTSMGKMGGNRGAGRGRG) are disordered. Over residues 111 to 129 (RGTSMGKMGGNRGAGRGRG) the composition is skewed to gly residues.

Belongs to the snRNP Sm proteins family. As to quaternary structure, component of the heptameric LSM1-LSM7 complex that forms a seven-membered ring structure with a donut shape. The LSM subunits are arranged in the order LSM1, LSM2, LSM3, LSM6, LSM5, LSM7 and LSM4. LSM4 subunit interacts only with its two neighboring subunits, LSM1A or LSM1B and LSM7. Component of the heptameric LSM2-LSM8 complex that forms a seven-membered ring structure with a donut shape. The LSM subunits are arranged in the order LSM8, LSM2, LSM3, LSM6, LSM5, LSM7 and LSM4. LSM4 subunit interacts only with its two neighboring subunits, LSM8 and LSM7. Methylated by PMRT15/SKB1 in response to salt stress or abscisic acid (ABA) treatment. As to expression, expressed in roots, leaves, stems, flowers and siliques.

Its subcellular location is the cytoplasm. It localises to the nucleus. Component of LSM protein complexes, which are involved in RNA processing. Component of the cytoplasmic LSM1-LSM7 complex which is involved in mRNA degradation by promoting decapping and leading to accurate 5'-3' mRNA decay. The cytoplasmic LSM1-LSM7 complex regulates developmental gene expression by the decapping of specific development-related transcripts. Component of the nuclear LSM2-LSM8 complex which is involved splicing nuclear mRNAs. LSM2-LSM8 binds directly to the U6 small nuclear RNAs (snRNAs) and is essential for accurate splicing of selected development-related mRNAs through the stabilization of the spliceosomal U6 snRNA. Plays a critical role in the regulation of development-related gene expression. This is Sm-like protein LSM4 from Arabidopsis thaliana (Mouse-ear cress).